We begin with the raw amino-acid sequence, 145 residues long: Basic phospholipase A2 cL037 (145 aa).

The signal sequence occupies residues 1–21 (MYPAHLLVLLAVCVSLLGASA). Positions 22–27 (ILPLPL) are excised as a propeptide. 7 cysteine pairs are disulfide-bonded: Cys-38-Cys-98, Cys-54-Cys-144, Cys-56-Cys-72, Cys-71-Cys-125, Cys-78-Cys-118, Cys-87-Cys-111, and Cys-105-Cys-116. The Ca(2+) site is built by Tyr-55, Gly-57, and Gly-59. Residue His-75 is part of the active site. Asp-76 provides a ligand contact to Ca(2+). Asp-119 is a catalytic residue.

It belongs to the phospholipase A2 family. Group I subfamily. D49 sub-subfamily. Requires Ca(2+) as cofactor. As to expression, expressed by the venom gland.

The protein resides in the secreted. The enzyme catalyses a 1,2-diacyl-sn-glycero-3-phosphocholine + H2O = a 1-acyl-sn-glycero-3-phosphocholine + a fatty acid + H(+). Its function is as follows. PLA2 catalyzes the calcium-dependent hydrolysis of the 2-acyl groups in 3-sn-phosphoglycerides. This Laticauda semifasciata (Black-banded sea krait) protein is Basic phospholipase A2 cL037.